A 90-amino-acid chain; its full sequence is Small ribosomal subunit protein uS15c (90 aa).

Belongs to the universal ribosomal protein uS15 family. Part of the 30S ribosomal subunit.

Its subcellular location is the plastid. It localises to the chloroplast. The chain is Small ribosomal subunit protein uS15c (rps15) from Daucus carota (Wild carrot).